Reading from the N-terminus, the 397-residue chain is 8-amino-7-oxononanoate synthase (397 aa).

Arginine 24 is a substrate binding site. A pyridoxal 5'-phosphate-binding site is contributed by 110-111 (GY). Histidine 135 contacts substrate. Positions 183, 211, and 240 each coordinate pyridoxal 5'-phosphate. At lysine 243 the chain carries N6-(pyridoxal phosphate)lysine. Threonine 357 serves as a coordination point for substrate.

This sequence belongs to the class-II pyridoxal-phosphate-dependent aminotransferase family. BioF subfamily. In terms of assembly, homodimer. Pyridoxal 5'-phosphate is required as a cofactor.

The enzyme catalyses 6-carboxyhexanoyl-[ACP] + L-alanine + H(+) = (8S)-8-amino-7-oxononanoate + holo-[ACP] + CO2. The protein operates within cofactor biosynthesis; biotin biosynthesis. Its function is as follows. Catalyzes the decarboxylative condensation of pimeloyl-[acyl-carrier protein] and L-alanine to produce 8-amino-7-oxononanoate (AON), [acyl-carrier protein], and carbon dioxide. In Hydrogenovibrio crunogenus (strain DSM 25203 / XCL-2) (Thiomicrospira crunogena), this protein is 8-amino-7-oxononanoate synthase.